The chain runs to 154 residues: Nascent polypeptide-associated complex subunit beta (154 aa).

One can recognise an NAC-A/B domain in the interval 34–99 (EQDDTKLIEA…PQEKDVTQLI (66 aa)). The segment at 125 to 154 (KNPELNAGGAEGAEEDIPDLIEGQKFDDVE) is disordered.

This sequence belongs to the NAC-beta family. Part of the nascent polypeptide-associated complex (NAC), consisting of EGD2 and EGD1. NAC associates with ribosomes via EGD1.

Its subcellular location is the cytoplasm. The protein resides in the nucleus. Component of the nascent polypeptide-associated complex (NAC), a dynamic component of the ribosomal exit tunnel, protecting the emerging polypeptides from interaction with other cytoplasmic proteins to ensure appropriate nascent protein targeting. The NAC complex also promotes mitochondrial protein import by enhancing productive ribosome interactions with the outer mitochondrial membrane and blocks the inappropriate interaction of ribosomes translating non-secretory nascent polypeptides with translocation sites in the membrane of the endoplasmic reticulum. EGD1 may act as a transcription factor that exert a negative effect on the expression of several genes that are transcribed by RNA polymerase II. This is Nascent polypeptide-associated complex subunit beta (EGD1) from Debaryomyces hansenii (strain ATCC 36239 / CBS 767 / BCRC 21394 / JCM 1990 / NBRC 0083 / IGC 2968) (Yeast).